The chain runs to 367 residues: Leucine carboxyl methyltransferase 1 (367 aa).

Residues arginine 84, glycine 109, aspartate 132, 187–188 (DL), and glutamate 212 each bind S-adenosyl-L-methionine.

This sequence belongs to the methyltransferase superfamily. LCMT family.

It carries out the reaction [phosphatase 2A protein]-C-terminal L-leucine + S-adenosyl-L-methionine = [phosphatase 2A protein]-C-terminal L-leucine methyl ester + S-adenosyl-L-homocysteine. Methylates the carboxyl group of the C-terminal leucine residue of protein phosphatase 2A catalytic subunits to form alpha-leucine ester residues. The chain is Leucine carboxyl methyltransferase 1 (PPM1) from Candida albicans (strain SC5314 / ATCC MYA-2876) (Yeast).